The primary structure comprises 217 residues: Glyoxalase ElbB (217 aa).

Cys-135 acts as the Nucleophile in catalysis.

It belongs to the peptidase C56 family. As to quaternary structure, homodimer.

The enzyme catalyses glyoxal + H2O = glycolate + H(+). In terms of biological role, displays glyoxalase activity, catalyzing the conversion of glyoxal to glycolate. However, this apparent glyoxalase activity may reflect a protein deglycase activity, which could be the primary function of this protein like other DJ-1 superfamily members such as PARK7, YajL, YhbO and HchA. Is not able to use methylglyoxal as substrate. The chain is Glyoxalase ElbB from Escherichia coli (strain K12).